Reading from the N-terminus, the 232-residue chain is Protein DOG1-like 4 (232 aa).

The DOG1 domain occupies 9 to 229 (EEKFLEFYES…RRWGNRRHYV (221 aa)).

The protein is Protein DOG1-like 4 of Arabidopsis thaliana (Mouse-ear cress).